Reading from the N-terminus, the 197-residue chain is Nucleoid occlusion factor SlmA (197 aa).

Residues 7 to 67 (INRREHILQC…GLIDFIEESL (61 aa)) form the HTH tetR-type domain. A DNA-binding region (H-T-H motif) is located at residues 30-49 (TTAKLAAEVGVSEAALYRHF).

The protein belongs to the nucleoid occlusion factor SlmA family. In terms of assembly, homodimer. Interacts with FtsZ.

It localises to the cytoplasm. It is found in the nucleoid. Required for nucleoid occlusion (NO) phenomenon, which prevents Z-ring formation and cell division over the nucleoid. Acts as a DNA-associated cell division inhibitor that binds simultaneously chromosomal DNA and FtsZ, and disrupts the assembly of FtsZ polymers. SlmA-DNA-binding sequences (SBS) are dispersed on non-Ter regions of the chromosome, preventing FtsZ polymerization at these regions. The polypeptide is Nucleoid occlusion factor SlmA (Shewanella sediminis (strain HAW-EB3)).